The chain runs to 562 residues: Protein wntless (562 aa).

Over 1-13 the chain is Cytoplasmic; that stretch reads MSGTILENLSGRK. A helical membrane pass occupies residues 14–34; it reads LSILVGSLLLCQVLCFLLGGL. At 35-239 the chain is on the lumenal side; sequence YAPVPAGHTN…AIHQNGGFTH (205 aa). Asn-58 is a glycosylation site (N-linked (GlcNAc...) asparagine). The helical transmembrane segment at 240 to 260 threads the bilayer; that stretch reads VWLMLKTLLFPFVVGIMVWFW. The Cytoplasmic portion of the chain corresponds to 261 to 270; that stretch reads RRVHLLQRSP. Residues 271 to 291 traverse the membrane as a helical segment; it reads ALLEYMLLYLGGALTFLNLPL. At 292–311 the chain is on the lumenal side; that stretch reads EYLSLTIEMPYMLLLSDIRQ. A helical membrane pass occupies residues 312–332; that stretch reads GIFYAMLLSFWLVFAGEHMLI. The Cytoplasmic portion of the chain corresponds to 333–344; it reads QDSSNKSTIRSR. The helical transmembrane segment at 345–365 threads the bilayer; the sequence is YWKHLSAVVVGCISLFVFDIS. Over 366–386 the chain is Lumenal; it reads ERGVQLRNPFYSIWTTPLGAK. The chain crosses the membrane as a helical span at residues 387 to 407; sequence VAMSFILLAGVSAAVYFLFLC. Topologically, residues 408–441 are cytoplasmic; the sequence is YMISKVFKNIGDKRTSLPSMSQARRLHYEGLIYR. Residues 442–462 form a helical membrane-spanning segment; that stretch reads FKFLMLATLLCAALTVTGFIM. The Lumenal segment spans residues 463–482; it reads GQMAEGQWKWNDDVEIQLTS. The helical transmembrane segment at 483 to 503 threads the bilayer; the sequence is AFLTGVYGMWNIYIFALLILY. Topologically, residues 504–562 are cytoplasmic; that stretch reads APSHKQWPTMHHSDETTQSNENIVASAASEEIEFSNLPSDSNPSEISSLTSFTRKVAFE. Residues 538–562 are disordered; that stretch reads SNLPSDSNPSEISSLTSFTRKVAFE. The span at 539–556 shows a compositional bias: polar residues; the sequence is NLPSDSNPSEISSLTSFT.

It belongs to the wntless family. Interacts with wg; in the Golgi. Interacts with Vps35, a component of the retromer complex; wls stability is regulated by Vps35.

The protein localises to the presynaptic cell membrane. It localises to the postsynaptic cell membrane. Its subcellular location is the cell membrane. It is found in the endoplasmic reticulum membrane. The protein resides in the endosome membrane. The protein localises to the golgi apparatus membrane. A segment polarity gene required for wingless (wg)-dependent patterning processes, acting in both wg-sending cells and wg-target cells. In non-neuronal cells wls directs wg secretion. The wls traffic loop encompasses the Golgi, the cell surface, an endocytic compartment and a retrograde route leading back to the Golgi, and involves clathrin-mediated endocytosis and the retromer complex (a conserved protein complex consisting of Vps35 and Vps26). In neuronal cells (the larval motorneuron NMJ), the wg signal moves across the synapse via the release of wls-containing exosome-like vesicles. Postsynaptic wls is required for the trafficking of fz2 through the fz2-interacting protein Grip. This chain is Protein wntless, found in Drosophila pseudoobscura pseudoobscura (Fruit fly).